The sequence spans 449 residues: Cytochrome P450 monooxygenase iliC (449 aa).

A helical membrane pass occupies residues 28 to 44 (TFAITFMGVKQICTIEG). Position 397 (C397) interacts with heme.

Belongs to the cytochrome P450 family. The cofactor is heme.

It localises to the membrane. It catalyses the reaction (3E,5S)-3-[(2E,4E,8S,10E,12Z)-1-hydroxy-4,8-dimethyltetradeca-2,4,10,12-tetraen-1-ylidene]-5-[(4-hydroxyphenyl)methyl]pyrrolidine-2,4-dione + reduced [NADPH--hemoprotein reductase] + O2 = 3-[(2E,4E,8S,10E,12Z)-4,8-dimethyltetradeca-2,4,10,12-tetraenoyl]-4-hydroxy-5-(4-hydroxyphenyl)-1,2-dihydropyridin-2-one + oxidized [NADPH--hemoprotein reductase] + 2 H2O. It participates in mycotoxin biosynthesis. In terms of biological role, cytochrome P450 monooxygenase; part of the gene cluster that mediates the biosynthesis of ilicicolin H, a 4-hydroxy-2-pyridonealkaloid that has potent and broad antifungal activities by inhibiting the mitochondrial respiration chain. IliC catalyzes the ring expansion of the tetramate intermediate to the acyclic 2-pyridone intermediate that contains the trans bis-diene chain. The biosynthesis of ilicicolin H starts with formation of the tetramic acid by the hybrid PKS-NRPS synthetase iliA with the partnering trans-enoyl reductase iliB since iliA lacks a designated enoylreductase (ER) domain. The cytochrome P450 monooxygenase iliC then catalyzes the ring expansion of the tetramate to the acyclic 2-pyridone. The pericyclase iliD further converts the acyclic 2-pyridone into 8-epi-ilicicolin H. 8-epi-ilicicolin H might then spontaneously convert to ilicicolin H since ilicicolin H is produced in the absence of the epimerase iliE, in contrast to what was observed for the Talaromyces variabilis ilicolin H biosynthetic pathway. The polypeptide is Cytochrome P450 monooxygenase iliC (Hypocrea jecorina (strain QM6a) (Trichoderma reesei)).